A 27-amino-acid polypeptide reads, in one-letter code: NADH-ubiquinone oxidoreductase chain 1 (27 aa).

Residues 3–23 (LIFPLVGSLLLVICVMVGVAF) traverse the membrane as a helical segment.

It belongs to the complex I subunit 1 family.

It is found in the mitochondrion inner membrane. The catalysed reaction is a ubiquinone + NADH + 5 H(+)(in) = a ubiquinol + NAD(+) + 4 H(+)(out). Its function is as follows. Core subunit of the mitochondrial membrane respiratory chain NADH dehydrogenase (Complex I) that is believed to belong to the minimal assembly required for catalysis. Complex I functions in the transfer of electrons from NADH to the respiratory chain. The immediate electron acceptor for the enzyme is believed to be ubiquinone. This Simulium vittatum (Striped black fly) protein is NADH-ubiquinone oxidoreductase chain 1 (ND1).